A 312-amino-acid polypeptide reads, in one-letter code: Ribosomal protein L11 methyltransferase (312 aa).

Residues Thr-162, Gly-183, Asp-205, and Asn-248 each coordinate S-adenosyl-L-methionine.

It belongs to the methyltransferase superfamily. PrmA family.

It localises to the cytoplasm. It carries out the reaction L-lysyl-[protein] + 3 S-adenosyl-L-methionine = N(6),N(6),N(6)-trimethyl-L-lysyl-[protein] + 3 S-adenosyl-L-homocysteine + 3 H(+). In terms of biological role, methylates ribosomal protein L11. This is Ribosomal protein L11 methyltransferase from Geobacillus thermodenitrificans (strain NG80-2).